Here is a 124-residue protein sequence, read N- to C-terminus: Ribonuclease pancreatic (124 aa).

Residues 1–13 (SETAAEKFERQHM) are compositionally biased toward basic and acidic residues. Residues 1–23 (SETAAEKFERQHMDSYSSSSSNS) are disordered. The substrate site is built by Lys7 and Arg10. His12 acts as the Proton acceptor in catalysis. 4 cysteine pairs are disulfide-bonded: Cys26–Cys84, Cys40–Cys95, Cys58–Cys110, and Cys65–Cys72. Residues 41–45 (KPVNT), Lys66, and Arg85 contribute to the substrate site. Residue His119 is the Proton donor of the active site.

The protein belongs to the pancreatic ribonuclease family. In terms of assembly, monomer. Interacts with and forms tight 1:1 complexes with RNH1. Dimerization of two such complexes may occur. Interaction with RNH1 inhibits this protein. In terms of tissue distribution, pancreas.

It localises to the secreted. The enzyme catalyses an [RNA] containing cytidine + H2O = an [RNA]-3'-cytidine-3'-phosphate + a 5'-hydroxy-ribonucleotide-3'-[RNA].. The catalysed reaction is an [RNA] containing uridine + H2O = an [RNA]-3'-uridine-3'-phosphate + a 5'-hydroxy-ribonucleotide-3'-[RNA].. Functionally, endonuclease that catalyzes the cleavage of RNA on the 3' side of pyrimidine nucleotides. Acts on single-stranded and double-stranded RNA. In Camelus bactrianus (Bactrian camel), this protein is Ribonuclease pancreatic (RNASE1).